A 151-amino-acid polypeptide reads, in one-letter code: NADPH-dependent 7-cyano-7-deazaguanine reductase (151 aa).

The active-site Thioimide intermediate is the Cys49. Asp56 (proton donor) is an active-site residue. Substrate contacts are provided by residues 71–73 (IES) and 90–91 (HE).

This sequence belongs to the GTP cyclohydrolase I family. QueF type 1 subfamily.

The protein localises to the cytoplasm. The catalysed reaction is 7-aminomethyl-7-carbaguanine + 2 NADP(+) = 7-cyano-7-deazaguanine + 2 NADPH + 3 H(+). It participates in tRNA modification; tRNA-queuosine biosynthesis. In terms of biological role, catalyzes the NADPH-dependent reduction of 7-cyano-7-deazaguanine (preQ0) to 7-aminomethyl-7-deazaguanine (preQ1). This Caulobacter vibrioides (strain ATCC 19089 / CIP 103742 / CB 15) (Caulobacter crescentus) protein is NADPH-dependent 7-cyano-7-deazaguanine reductase.